We begin with the raw amino-acid sequence, 179 residues long: dCTP deaminase (179 aa).

DCTP-binding positions include 101–106 (RSTLAR) and aspartate 117. Glutamate 127 serves as the catalytic Proton donor/acceptor. Residue glutamine 165 participates in dCTP binding.

Belongs to the dCTP deaminase family. Homotrimer.

It catalyses the reaction dCTP + H2O + H(+) = dUTP + NH4(+). It participates in pyrimidine metabolism; dUMP biosynthesis; dUMP from dCTP (dUTP route): step 1/2. Catalyzes the deamination of dCTP to dUTP. The polypeptide is dCTP deaminase (Caldivirga maquilingensis (strain ATCC 700844 / DSM 13496 / JCM 10307 / IC-167)).